The chain runs to 438 residues: Enolase (438 aa).

Q174 provides a ligand contact to (2R)-2-phosphoglycerate. Residue E216 is the Proton donor of the active site. D253, E297, and D324 together coordinate Mg(2+). Residues K349, R378, S379, and K400 each coordinate (2R)-2-phosphoglycerate. K349 serves as the catalytic Proton acceptor.

Belongs to the enolase family. Component of the RNA degradosome, a multiprotein complex involved in RNA processing and mRNA degradation. The cofactor is Mg(2+).

It is found in the cytoplasm. Its subcellular location is the secreted. The protein localises to the cell surface. The enzyme catalyses (2R)-2-phosphoglycerate = phosphoenolpyruvate + H2O. The protein operates within carbohydrate degradation; glycolysis; pyruvate from D-glyceraldehyde 3-phosphate: step 4/5. Its function is as follows. Catalyzes the reversible conversion of 2-phosphoglycerate (2-PG) into phosphoenolpyruvate (PEP). It is essential for the degradation of carbohydrates via glycolysis. The sequence is that of Enolase from Psychrobacter sp. (strain PRwf-1).